We begin with the raw amino-acid sequence, 185 residues long: Putative manganese efflux pump MntP (185 aa).

6 consecutive transmembrane segments (helical) span residues 3–23, 41–61, 70–90, 101–121, 123–143, and 165–185; these read PFAV…VSVG, AVFG…GVAA, HWLA…AAVW, SFTV…AVGV, LAFL…ATFL, and AVAG…HLTA.

It belongs to the MntP (TC 9.B.29) family.

It localises to the cell inner membrane. In terms of biological role, probably functions as a manganese efflux pump. This Bradyrhizobium sp. (strain BTAi1 / ATCC BAA-1182) protein is Putative manganese efflux pump MntP.